The sequence spans 587 residues: Putative adhesin (587 aa).

The N-terminal stretch at 1–19 is a signal peptide; it reads MKFAISTLLIILQAAAVFA. A disulfide bridge links C211 with C261. N-linked (GlcNAc...) asparagine glycosylation occurs at N239. Tandem repeats lie at residues 432–455, 466–489, 491–512, and 513–531. Residues 432-531 form a 4 X 24 AA approximate tandem repeats, Thr-rich region; it reads IVTVITKEGG…EGGEKVTTTY (100 aa). A lipid anchor (GPI-anchor amidated serine) is attached at S562. The propeptide at 563–587 is removed in mature form; that stretch reads EAQVNLGSKSAVGLLAIVPMLFLAI.

The GPI-anchor is attached to the protein in the endoplasmic reticulum and serves to target the protein to the cell surface. There, the glucosamine-inositol phospholipid moiety is cleaved off and the GPI-modified mannoprotein is covalently attached via its lipidless GPI glycan remnant to the 1,6-beta-glucan of the outer cell wall layer.

The protein resides in the cell membrane. It localises to the secreted. Its subcellular location is the cell wall. Its function is as follows. Putative adhesion protein. May be involved in cell-cell interaction, interacting with other proteins by salt bridges and hydrogen bonds. The protein is Putative adhesin of Komagataella phaffii (strain ATCC 76273 / CBS 7435 / CECT 11047 / NRRL Y-11430 / Wegner 21-1) (Yeast).